We begin with the raw amino-acid sequence, 351 residues long: Phosphoribosylformylglycinamidine cyclo-ligase (351 aa).

The protein belongs to the AIR synthase family.

The protein localises to the cytoplasm. The catalysed reaction is 2-formamido-N(1)-(5-O-phospho-beta-D-ribosyl)acetamidine + ATP = 5-amino-1-(5-phospho-beta-D-ribosyl)imidazole + ADP + phosphate + H(+). It functions in the pathway purine metabolism; IMP biosynthesis via de novo pathway; 5-amino-1-(5-phospho-D-ribosyl)imidazole from N(2)-formyl-N(1)-(5-phospho-D-ribosyl)glycinamide: step 2/2. In Burkholderia vietnamiensis (strain G4 / LMG 22486) (Burkholderia cepacia (strain R1808)), this protein is Phosphoribosylformylglycinamidine cyclo-ligase.